Here is a 225-residue protein sequence, read N- to C-terminus: Small ribosomal subunit protein uS2 (225 aa).

Residues 1 to 14 (MAEAKPAPEKEAAA) are compositionally biased toward basic and acidic residues. The segment at 1–33 (MAEAKPAPEKEAAAKTESVPVETEGEGPSVKEG) is disordered.

It belongs to the universal ribosomal protein uS2 family.

This is Small ribosomal subunit protein uS2 from Methanosarcina barkeri (strain Fusaro / DSM 804).